The primary structure comprises 206 residues: MARYTGPKCKLARREGTDLFLKSARRSIDSKCKLDSRPGQHGAKQPRLSDYGIHLREKQKIRRIYGVLERQFRKYFAEAERRKGSTGENLLQILESRLDNVVYRMGYGSTRAESRQLVSHKAIVVNGEVVNIPSYQVKAGDVVSVREKSKKQVRIAESLALAEQIGFPGWVSVDPKKMEGTFKNAPERSELSSDINEQLVVEFYSK.

One can recognise an S4 RNA-binding domain in the interval 96-156; it reads SRLDNVVYRM…EKSKKQVRIA (61 aa).

It belongs to the universal ribosomal protein uS4 family. In terms of assembly, part of the 30S ribosomal subunit. Contacts protein S5. The interaction surface between S4 and S5 is involved in control of translational fidelity.

Functionally, one of the primary rRNA binding proteins, it binds directly to 16S rRNA where it nucleates assembly of the body of the 30S subunit. In terms of biological role, with S5 and S12 plays an important role in translational accuracy. This chain is Small ribosomal subunit protein uS4, found in Laribacter hongkongensis (strain HLHK9).